A 600-amino-acid polypeptide reads, in one-letter code: Jacalin-related lectin 18 (600 aa).

4 Jacalin-type lectin domains span residues 12-158 (TQRL…YFTC), 161-303 (PTRM…YFTT), 304-447 (SPFI…YFRL), and 454-597 (GEKV…HVLP).

The protein belongs to the jacalin lectin family.

This is Jacalin-related lectin 18 (JAL18) from Arabidopsis thaliana (Mouse-ear cress).